Consider the following 250-residue polypeptide: 2,3-bisphosphoglycerate-dependent phosphoglycerate mutase (250 aa).

Substrate-binding positions include 10-17, 23-24, Arg62, 89-92, Lys100, 116-117, and 185-186; these read RHGESEWN, TG, ERHY, RR, and GN. The Tele-phosphohistidine intermediate role is filled by His11. Glu89 (proton donor/acceptor) is an active-site residue.

This sequence belongs to the phosphoglycerate mutase family. BPG-dependent PGAM subfamily. In terms of assembly, homodimer.

It carries out the reaction (2R)-2-phosphoglycerate = (2R)-3-phosphoglycerate. It functions in the pathway carbohydrate degradation; glycolysis; pyruvate from D-glyceraldehyde 3-phosphate: step 3/5. Functionally, catalyzes the interconversion of 2-phosphoglycerate and 3-phosphoglycerate. The protein is 2,3-bisphosphoglycerate-dependent phosphoglycerate mutase of Edwardsiella ictaluri (strain 93-146).